The primary structure comprises 295 residues: 4-diphosphocytidyl-2-C-methyl-D-erythritol kinase (295 aa).

K22 is a catalytic residue. 106 to 116 contacts ATP; sequence PAGGGFGGGSS. D148 is a catalytic residue.

The protein belongs to the GHMP kinase family. IspE subfamily.

The enzyme catalyses 4-CDP-2-C-methyl-D-erythritol + ATP = 4-CDP-2-C-methyl-D-erythritol 2-phosphate + ADP + H(+). The protein operates within isoprenoid biosynthesis; isopentenyl diphosphate biosynthesis via DXP pathway; isopentenyl diphosphate from 1-deoxy-D-xylulose 5-phosphate: step 3/6. In terms of biological role, catalyzes the phosphorylation of the position 2 hydroxy group of 4-diphosphocytidyl-2C-methyl-D-erythritol. The chain is 4-diphosphocytidyl-2-C-methyl-D-erythritol kinase from Xanthomonas oryzae pv. oryzae (strain MAFF 311018).